Consider the following 500-residue polypeptide: Probable cardiolipin synthase YwiE (500 aa).

A run of 3 helical transmembrane segments spans residues 6–26 (LEFFFLYMMLIGAYVIWFFPV), 31–51 (FYGGLLCYISIILFSIYSLIL), and 59–79 (TLLWIHILVFFPIVGYVFYLF). 2 consecutive PLD phosphodiesterase domains span residues 237-264 (LNFRNHRKIVIIDGKTGFVGGLNVGKEY) and 413-440 (QKGFMHQKVMIIDGDLASVGTANMDMRS). Active-site residues include H242, K244, D249, H418, K420, and D425.

It belongs to the phospholipase D family. Cardiolipin synthase subfamily.

Its subcellular location is the cell membrane. It catalyses the reaction 2 a 1,2-diacyl-sn-glycero-3-phospho-(1'-sn-glycerol) = a cardiolipin + glycerol. Functionally, catalyzes the reversible phosphatidyl group transfer from one phosphatidylglycerol molecule to another to form cardiolipin (CL) (diphosphatidylglycerol) and glycerol. May have a role in the heat shock response since the level of the transcript of ywiE increases after a heat shock. The sequence is that of Probable cardiolipin synthase YwiE (ywiE) from Bacillus subtilis (strain 168).